A 600-amino-acid chain; its full sequence is Adenine deaminase 4 (600 aa).

Belongs to the metallo-dependent hydrolases superfamily. Adenine deaminase family. Requires Mn(2+) as cofactor.

The catalysed reaction is adenine + H2O + H(+) = hypoxanthine + NH4(+). The sequence is that of Adenine deaminase 4 from Rhizobium meliloti (strain 1021) (Ensifer meliloti).